The primary structure comprises 463 residues: POU domain, class 2, transcription factor 2 (463 aa).

Disordered stretches follow at residues 1-87 (MVHS…QPHL), 159-182 (QPRA…EEPS), 259-282 (SSLP…GRRR), 341-376 (PCSA…LSQA), and 393-463 (TLHP…PYQP). Over residues 12 to 37 (RMSKPLEAEKQSLDSPSEHTDTERNG) the composition is skewed to basic and acidic residues. The span at 41–60 (NHQNPQNKASPFSVSPTGPS) shows a compositional bias: polar residues. Pro residues predominate over residues 75-85 (AAPPPPQPAQP). One can recognise a POU-specific domain in the interval 179 to 253 (EEPSDLEELE…LLEKWLNDAE (75 aa)). Residues 259-272 (SSLPSPNQLSSPSL) are compositionally biased toward low complexity. The segment at residues 281 to 340 (RRKKRTSIETNVRFALEKSFLANQKPTSEEILLIAEQLHMEKEVIRVWFCNRRQKEKRIN) is a DNA-binding region (homeobox). Positions 373–394 (LSQASSSLSTTVTTLSSAVGTL) are leucine-zipper. Residues 400-409 (AGGGGGGGGA) show a composition bias toward gly residues.

Belongs to the POU transcription factor family. Class-2 subfamily. As to quaternary structure, interacts with NR3C1, AR and PGR. Interacts with POU2AF1; the interaction increases POU2F2 transactivation activity. As to expression, highest in B cells, but also present in brain (neuronal and glial cells), intestine, kidney, and testes. In terms of tissue distribution, expressed at higher levels in B-cells than in neuronal cells. Expressed in neuronal cell lines and brain, but not dorsal root ganglia. As to expression, expressed at lower levels in neuronal cells than in B cells. In terms of tissue distribution, expressed in neuronal cell lines, and at lower levels in neuroblastoma and dorsal root ganglia. Widely expressed in the developing nervous system but expression is confined to very specific regions in the adult brain, it is expressed at a lower level in B cells. As to expression, either absent in, or expressed at very low levels in neuronal cells and brain. In terms of tissue distribution, expressed in all tissues tested: mammary gland, liver, spleen, lung, kidney intestine, uterus and ovary of a virgin mouse. Levels of isoform OCT2.7 are highest in spleen and lung. In mammary gland, expression is localized to the alveolus epithelial cells.

The protein localises to the cytoplasm. Its subcellular location is the nucleus. Its activity is regulated as follows. Transactivation activity is enhanced by transcriptional coactivator POU2AF1. In terms of biological role, transcription factor that specifically binds to the octamer motif (5'-ATTTGCAT-3'). Regulates IL6 expression in B cells with POU2AF1. Regulates transcription in a number of tissues in addition to activating immunoglobulin gene expression. Modulates transcription transactivation by NR3C1, AR and PGR. Activates octamer-containing promoters. Its function is as follows. Represses some promoters and activate others. Functionally, represses some promoters and activate others. Activates the U2 small nuclear RNA (snRNA) promoter. In terms of biological role, unable to bind to the octamer motif, but can still activate the beta-casein gene promoter at low levels. The sequence is that of POU domain, class 2, transcription factor 2 from Mus musculus (Mouse).